A 388-amino-acid chain; its full sequence is UDP-N-acetylglucosamine--N-acetylmuramyl-(pentapeptide) pyrophosphoryl-undecaprenol N-acetylglucosamine transferase (388 aa).

UDP-N-acetyl-alpha-D-glucosamine contacts are provided by residues 15-17 (TGG), Asn-125, Arg-168, Ser-196, and Gln-297.

It belongs to the glycosyltransferase 28 family. MurG subfamily.

The protein resides in the cell inner membrane. The enzyme catalyses di-trans,octa-cis-undecaprenyl diphospho-N-acetyl-alpha-D-muramoyl-L-alanyl-D-glutamyl-meso-2,6-diaminopimeloyl-D-alanyl-D-alanine + UDP-N-acetyl-alpha-D-glucosamine = di-trans,octa-cis-undecaprenyl diphospho-[N-acetyl-alpha-D-glucosaminyl-(1-&gt;4)]-N-acetyl-alpha-D-muramoyl-L-alanyl-D-glutamyl-meso-2,6-diaminopimeloyl-D-alanyl-D-alanine + UDP + H(+). It participates in cell wall biogenesis; peptidoglycan biosynthesis. In terms of biological role, cell wall formation. Catalyzes the transfer of a GlcNAc subunit on undecaprenyl-pyrophosphoryl-MurNAc-pentapeptide (lipid intermediate I) to form undecaprenyl-pyrophosphoryl-MurNAc-(pentapeptide)GlcNAc (lipid intermediate II). This Novosphingobium aromaticivorans (strain ATCC 700278 / DSM 12444 / CCUG 56034 / CIP 105152 / NBRC 16084 / F199) protein is UDP-N-acetylglucosamine--N-acetylmuramyl-(pentapeptide) pyrophosphoryl-undecaprenol N-acetylglucosamine transferase.